The following is a 156-amino-acid chain: MPCLLPPTQVPEAPSISANNGVLFSSFALLFMFFNSLAISLGSKELYRSSRSCTICSSLIPCRTLIFSLWIDFASDSGASVLVCCFSASLPLVFFFWALFSLSLSFQDDIFLGLYNSGNPVPQLLVLRVPLSLLSTESDVSFSTISPSKSITMVAE.

Helical transmembrane passes span 21 to 41, 54 to 74, and 80 to 100; these read GVLF…AISL, TICS…IDFA, and SVLV…WALF.

Its subcellular location is the membrane. This is an uncharacterized protein from Saccharomyces cerevisiae (strain ATCC 204508 / S288c) (Baker's yeast).